The following is a 193-amino-acid chain: Transcriptional repressor NrdR (193 aa).

A zinc finger spans residues 3–34 (CPYCGGLDTQVKDSRPSEDASAIRRRRICPDC). In terms of domain architecture, ATP-cone spans 49–139 (LTVVKRSGRK…VYKNFREAKD (91 aa)). Positions 150 to 193 (DQQDGAVPQAEADRPIGAGPPSEAAQPAAGEGGDAPMRRARSRA) are disordered.

The protein belongs to the NrdR family. It depends on Zn(2+) as a cofactor.

Its function is as follows. Negatively regulates transcription of bacterial ribonucleotide reductase nrd genes and operons by binding to NrdR-boxes. The polypeptide is Transcriptional repressor NrdR (Methylobacterium nodulans (strain LMG 21967 / CNCM I-2342 / ORS 2060)).